We begin with the raw amino-acid sequence, 478 residues long: Growth/differentiation factor 10 (478 aa).

The first 33 residues, 1–33, serve as a signal peptide directing secretion; the sequence is MAHVPARTSPGPGPQLLLLLLPLFLLLLRDVAG. Positions 34-368 are excised as a propeptide; the sequence is SHRAPAWSAL…EKTMQKARRK (335 aa). Residues Asn118, Asn156, and Asn281 are each glycosylated (N-linked (GlcNAc...) asparagine). The disordered stretch occupies residues 266–319; the sequence is YDPFPAGDPEPRAAPNNSADPRVRRAAQATGPLQDNELPGLDERPPRAHAQHFH. 3 disulfides stabilise this stretch: Cys376–Cys443, Cys405–Cys475, and Cys409–Cys477. Asn469 is a glycosylation site (N-linked (GlcNAc...) asparagine).

The protein belongs to the TGF-beta family. In terms of assembly, homodimer or heterodimer. Can form a non-covalent complex of the mature region and the pro-region. Expressed in femur, brain, lung, skeletal muscle, pancreas and testis.

Its subcellular location is the secreted. Its function is as follows. Growth factor involved in osteogenesis and adipogenesis. Plays an inhibitory role in the process of osteoblast differentiation via SMAD2/3 pathway. Plays an inhibitory role in the process of adipogenesis. The sequence is that of Growth/differentiation factor 10 from Homo sapiens (Human).